Reading from the N-terminus, the 712-residue chain is U11/U12 small nuclear ribonucleoprotein 48 kDa protein (712 aa).

The CHHC U11-48K-type zinc finger occupies 98-125; that stretch reads FVRCPFDSNHFMPPEALFLHSLRCPNTL. 4 residues coordinate Zn(2+): C101, H107, H117, and C121. The disordered stretch occupies residues 562-712; sequence QSRSPIGNDQ…EDRYIPTEKE (151 aa). Basic and acidic residues-rich tracts occupy residues 585–595, 603–614, 629–663, 672–693, and 702–712; these read KQWKGENRADI, QNSDKVKRHDEY, KHSD…HSIE, SSRE…DRRS, and FEDRYIPTEKE.

In terms of assembly, component of the U11/U12 snRNPs that are part of the U12-type spliceosome. Not found in the major spliceosome.

The protein localises to the nucleus. In terms of biological role, likely involved in U12-type 5' splice site recognition. This is U11/U12 small nuclear ribonucleoprotein 48 kDa protein (SNRNP48) from Arabidopsis thaliana (Mouse-ear cress).